The primary structure comprises 766 residues: Deoxynucleotidyltransferase terminal-interacting protein 2 (766 aa).

Residues 1-99 (MVVTRSARPQ…DCSSVPEVQD (99 aa)) are disordered. Composition is skewed to polar residues over residues 13–28 (NEATSVESLRQKNSAV) and 42–56 (SPDNPNTTESQTTPE). Position 127 is a phosphothreonine (Thr-127). Phosphoserine is present on residues Ser-139, Ser-143, and Ser-146. Residues 155–175 (TEITTRRSKAKSQREPKQESH) form a disordered region. The segment covering 166–175 (SQREPKQESH) has biased composition (basic and acidic residues). Phosphoserine occurs at positions 180 and 190. Lys-217 is covalently cross-linked (Glycyl lysine isopeptide (Lys-Gly) (interchain with G-Cter in SUMO2)). Thr-229 carries the post-translational modification Phosphothreonine. 3 positions are modified to phosphoserine: Ser-236, Ser-248, and Ser-250. A Glycyl lysine isopeptide (Lys-Gly) (interchain with G-Cter in SUMO2) cross-link involves residue Lys-254. Phosphoserine is present on Ser-258. Lys-327 is covalently cross-linked (Glycyl lysine isopeptide (Lys-Gly) (interchain with G-Cter in SUMO2)). The residue at position 334 (Ser-334) is a Phosphoserine. Disordered stretches follow at residues 345-367 (VSQRHSTPESDKTTSESSTLNHE), 390-450 (KNAI…KDDS), and 520-557 (KAGEVATEEEEEEEEEESEEELSDHDRNKDNEFSDEDN). A Glycyl lysine isopeptide (Lys-Gly) (interchain with G-Cter in SUMO2) cross-link involves residue Lys-394. Basic and acidic residues predominate over residues 421–434 (DMSKEKEVDSESDT). Residues 435 to 444 (KPSNLEFNTT) show a composition bias toward polar residues. The stretch at 515–552 (LDEEDKAGEVATEEEEEEEEEESEEELSDHDRNKDNEF) forms a coiled coil. Residues 520–542 (KAGEVATEEEEEEEEEESEEELS) show a composition bias toward acidic residues. Residues 558-615 (LLSNTKSKLLKLMSSSIDTGLNIKELGGLYINFNADKVQLNKRTLTQMKEKRKDELLQ) form a tdBR region; mediates interaction with DNTT region. Residues Lys-568, Lys-594, and Lys-616 each participate in a glycyl lysine isopeptide (Lys-Gly) (interchain with G-Cter in SUMO2) cross-link. Residue Thr-620 is modified to Phosphothreonine. Glycyl lysine isopeptide (Lys-Gly) (interchain with G-Cter in SUMO2) cross-links involve residues Lys-636, Lys-659, Lys-668, Lys-696, and Lys-741.

As to quaternary structure, forms a ternary complex with DNTT and core histone; interaction with PCNA releases DNTT and H2A/H2B histones from this ternary complex. Interacts with ESR1, ESR2, PPARG and RXRA. Part of the small subunit (SSU) processome, composed of more than 70 proteins and the RNA chaperone small nucleolar RNA (snoRNA) U3.

The protein localises to the nucleus. Its subcellular location is the nucleolus. Functionally, regulates the transcriptional activity of DNTT and ESR1. May function as a chromatin remodeling protein. Part of the small subunit (SSU) processome, first precursor of the small eukaryotic ribosomal subunit. During the assembly of the SSU processome in the nucleolus, many ribosome biogenesis factors, an RNA chaperone and ribosomal proteins associate with the nascent pre-rRNA and work in concert to generate RNA folding, modifications, rearrangements and cleavage as well as targeted degradation of pre-ribosomal RNA by the RNA exosome. The protein is Deoxynucleotidyltransferase terminal-interacting protein 2 (DNTTIP2) of Bos taurus (Bovine).